Here is a 502-residue protein sequence, read N- to C-terminus: ATP synthase subunit alpha (502 aa).

169-176 (GDRQTGKT) contacts ATP.

It belongs to the ATPase alpha/beta chains family. As to quaternary structure, F-type ATPases have 2 components, CF(1) - the catalytic core - and CF(0) - the membrane proton channel. CF(1) has five subunits: alpha(3), beta(3), gamma(1), delta(1), epsilon(1). CF(0) has three main subunits: a(1), b(2) and c(9-12). The alpha and beta chains form an alternating ring which encloses part of the gamma chain. CF(1) is attached to CF(0) by a central stalk formed by the gamma and epsilon chains, while a peripheral stalk is formed by the delta and b chains.

Its subcellular location is the cell membrane. The catalysed reaction is ATP + H2O + 4 H(+)(in) = ADP + phosphate + 5 H(+)(out). Functionally, produces ATP from ADP in the presence of a proton gradient across the membrane. The alpha chain is a regulatory subunit. This chain is ATP synthase subunit alpha, found in Exiguobacterium sp. (strain ATCC BAA-1283 / AT1b).